A 324-amino-acid chain; its full sequence is Arginase (324 aa).

The Mn(2+) site is built by His115, Asp143, His145, and Asp147. Substrate is bound by residues 145–149 (HADIN), 156–158 (SGN), and Asp202. Asp249 and Asp251 together coordinate Mn(2+). Thr263 and Glu294 together coordinate substrate.

This sequence belongs to the arginase family. In terms of assembly, homotrimer. Requires Mn(2+) as cofactor.

It carries out the reaction L-arginine + H2O = urea + L-ornithine. Its pathway is nitrogen metabolism; urea cycle; L-ornithine and urea from L-arginine: step 1/1. The polypeptide is Arginase (agaA) (Emericella nidulans (strain FGSC A4 / ATCC 38163 / CBS 112.46 / NRRL 194 / M139) (Aspergillus nidulans)).